The following is an 851-amino-acid chain: Protein BCK2 (851 aa).

Positions 1-10 (MPKNSHHHRS) are enriched in basic residues. Disordered stretches follow at residues 1-91 (MPKN…RKKS), 233-271 (EVVP…MNTK), 315-355 (SLSL…LPEE), 466-504 (FLDG…YITT), and 698-722 (HASR…PNNV). Over residues 11-23 (SSVNSTKSRSTES) the composition is skewed to low complexity. Positions 37 to 66 (ASGSTQASPDRNSSTGSCSTPVLPTMNVMS) are enriched in polar residues. Basic and acidic residues predominate over residues 71-81 (VLLEDPRDNHT). Polar residues-rich tracts occupy residues 254–271 (SETN…MNTK), 334–349 (SPRT…SQSK), 489–504 (ISDA…YITT), and 702–722 (SESN…PNNV). S334 is modified (phosphoserine). 2 positions are modified to phosphoserine: S757 and S761.

Its function is as follows. Dosage dependent suppressor of PKC1 deletion and MPK1 deletion. Involved in cell lysis. This is Protein BCK2 (BCK2) from Saccharomyces cerevisiae (strain ATCC 204508 / S288c) (Baker's yeast).